The primary structure comprises 879 residues: MTTETGPDSEVKKAQEETPQQPEAAAAVTTPVTPAGHSHPETNSNEKHLTQQDTRPAEQSLDMDDKDYSEADGLSERTTPSKAQKSPQKIAKKFKSAICRVTLLDASEYECEVEKHGRGQVLFDLVCEHLNLLEKDYFGLTFCDADSQKNWLDPSKEIKKQIRSSPWNFAFTVKFYPPDPAQLTEDITRYYLCLQLRADIITGRLPCSFVTHALLGSYAVQAELGDYDAEEHVGNYVSELRFAPNQTRELEERIMELHKTYRGMTPGEAEIHFLENAKKLSMYGVDLHHAKDSEGIDIMLGVCANGLLIYRDRLRINRFAWPKILKISYKRSNFYIKIRPGEYEQFESTIGFKLPNHRSAKRLWKVCIEHHTFFRLVSPEPPPKGFLVMGSKFRYSGRTQAQTRQASALIDRPAPFFERSSSKRYTMSRSLDGAEFSRPASVSENHDAGPEGDKREDDAESGGRRSEAEEGEVRTPTKIKELKPEQETTPRHKQEFLDKPEDVLLKHQASINELKRTLKEPNSKLIHRDRDWDRERRLPSSPASPSPKGTPEKASERAGLREGSEEKVKPPRPRAPESDMGDEDQDQERDAVFLKDNHLAIERKCSSITVSSTSSLEAEVDFTVIGDYHGGAFEDFSRSLPELDRDKSDSETEGLVFAQDLKGPSSQEDESGGLEDSPDRGACSTPEMPQFESVKAETMTVSSLAIRKKIEPEAMLQSRVSAADSTQVDGGTPMVKDFMTTPPCITTETISTTMENSLKSGKGAAAMIPGPQTVATEIRSLSPIIGKDVLTSTYGATAETLSTSTTTHVTKTVKGGFSETRIEKRIIITGDEDVDQDQALALAIKEAKLQHPDMLVTKAVVYRETDPSPEERDKKPQES.

The disordered stretch occupies residues 1 to 88 (MTTETGPDSE…TPSKAQKSPQ (88 aa)). The segment covering 17–35 (ETPQQPEAAAAVTTPVTPA) has biased composition (low complexity). Threonine 30 is modified (phosphothreonine). Basic and acidic residues predominate over residues 38–50 (SHPETNSNEKHLT). A Phosphoserine modification is found at serine 75. Positions 76–87 (ERTTPSKAQKSP) are enriched in polar residues. A Phosphothreonine modification is found at threonine 79. Residues 97 to 378 (AICRVTLLDA…EHHTFFRLVS (282 aa)) enclose the FERM domain. The residue at position 343 (tyrosine 343) is a Phosphotyrosine. Phosphoserine is present on residues serine 378, serine 430, serine 437, serine 461, and serine 466. The hydrophilic stretch occupies residues 381 to 482 (PPPKGFLVMG…VRTPTKIKEL (102 aa)). The interval 428-501 (SRSLDGAEFS…HKQEFLDKPE (74 aa)) is disordered. The span at 444–501 (ENHDAGPEGDKREDDAESGGRRSEAEEGEVRTPTKIKELKPEQETTPRHKQEFLDKPE) shows a compositional bias: basic and acidic residues. Position 475 is a phosphothreonine (threonine 475). A spectrin--actin-binding region spans residues 483–541 (KPEQETTPRHKQEFLDKPEDVLLKHQASINELKRTLKEPNSKLIHRDRDWDRERRLPSS). Serine 510 bears the Phosphoserine mark. A compositionally biased stretch (basic and acidic residues) spans 514-538 (LKRTLKEPNSKLIHRDRDWDRERRL). The segment at 514 to 594 (LKRTLKEPNS…QDQERDAVFL (81 aa)) is disordered. Phosphoserine occurs at positions 540, 541, 544, and 546. Threonine 550 carries the post-translational modification Phosphothreonine. The segment covering 550–577 (TPEKASERAGLREGSEEKVKPPRPRAPE) has biased composition (basic and acidic residues). A phosphoserine mark is found at serine 564, serine 578, serine 639, serine 648, serine 650, serine 665, serine 666, serine 671, serine 677, and serine 684. The tract at residues 657 to 696 (FAQDLKGPSSQEDESGGLEDSPDRGACSTPEMPQFESVKA) is disordered. Residue threonine 685 is modified to Phosphothreonine. Serine 721, serine 782, and serine 868 each carry phosphoserine. The C-terminal (CTD) stretch occupies residues 743 to 879 (PCITTETIST…EERDKKPQES (137 aa)).

Interacts with AGAP2. As to expression, highest expression in brain, also present in kidney, olfactory epithelium, retina, sensory ganglia, gastrointestinal tract (only enteric neurons) and lung.

It is found in the cytoplasm. The protein resides in the cytoskeleton. Functionally, may function to confer stability and plasticity to neuronal membrane via multiple interactions, including the spectrin-actin-based cytoskeleton, integral membrane channels and membrane-associated guanylate kinases. The chain is Band 4.1-like protein 1 from Mus musculus (Mouse).